A 470-amino-acid chain; its full sequence is Pyruvate kinase I (470 aa).

Residue Arg-32 participates in substrate binding. K(+) contacts are provided by Asn-34, Ser-36, Asp-66, and Thr-67. ATP is bound at residue 34 to 37 (NFSH). Arg-73 is a binding site for ATP. Lys-76 carries the N6-acetyllysine modification. Lys-156 contacts ATP. Residue Glu-222 coordinates Mg(2+). Positions 245, 246, and 278 each coordinate substrate. Position 246 (Asp-246) interacts with Mg(2+). Lys-319 carries the N6-acetyllysine modification.

This sequence belongs to the pyruvate kinase family. Homotetramer. It depends on Mg(2+) as a cofactor. The cofactor is K(+).

The enzyme catalyses pyruvate + ATP = phosphoenolpyruvate + ADP + H(+). Its pathway is carbohydrate degradation; glycolysis; pyruvate from D-glyceraldehyde 3-phosphate: step 5/5. This is Pyruvate kinase I (pykF) from Escherichia coli O157:H7.